We begin with the raw amino-acid sequence, 179 residues long: Sodium/potassium-transporting ATPase subunit beta-1-interacting protein 3 (179 aa).

4 helical membrane passes run 5–22 (TGRCTLVFICTLQMLVAL), 35–55 (APILGNFLHIIVVILGLFGTI), 62–82 (IVAYTIWTAFWVAWNVFIICF), and 151–171 (AVQILLSLIGFVYACYVISVI).

This sequence belongs to the NKAIN family. In terms of assembly, interacts with atp1b1 C-terminus.

Its subcellular location is the cell membrane. The polypeptide is Sodium/potassium-transporting ATPase subunit beta-1-interacting protein 3 (nkain3) (Xenopus laevis (African clawed frog)).